Reading from the N-terminus, the 430-residue chain is Trigger factor (430 aa).

Residues 163 to 248 (GNIAIIDFKG…IKDIKVKELP (86 aa)) form the PPIase FKBP-type domain.

This sequence belongs to the FKBP-type PPIase family. Tig subfamily.

It localises to the cytoplasm. It carries out the reaction [protein]-peptidylproline (omega=180) = [protein]-peptidylproline (omega=0). In terms of biological role, involved in protein export. Acts as a chaperone by maintaining the newly synthesized protein in an open conformation. Functions as a peptidyl-prolyl cis-trans isomerase. This is Trigger factor from Clostridium botulinum (strain Kyoto / Type A2).